A 359-amino-acid chain; its full sequence is DNA polymerase IV (359 aa).

The region spanning 7–188 (IIHIDMDAFY…IPIGKFFGVG (182 aa)) is the UmuC domain. Mg(2+) contacts are provided by D11 and D106. Residue E107 is part of the active site.

It belongs to the DNA polymerase type-Y family. Monomer. Mg(2+) is required as a cofactor.

It is found in the cytoplasm. The catalysed reaction is DNA(n) + a 2'-deoxyribonucleoside 5'-triphosphate = DNA(n+1) + diphosphate. Poorly processive, error-prone DNA polymerase involved in untargeted mutagenesis. Copies undamaged DNA at stalled replication forks, which arise in vivo from mismatched or misaligned primer ends. These misaligned primers can be extended by PolIV. Exhibits no 3'-5' exonuclease (proofreading) activity. May be involved in translesional synthesis, in conjunction with the beta clamp from PolIII. The protein is DNA polymerase IV of Clostridium perfringens (strain ATCC 13124 / DSM 756 / JCM 1290 / NCIMB 6125 / NCTC 8237 / Type A).